Reading from the N-terminus, the 537-residue chain is O-phosphoserine--tRNA(Cys) ligase (537 aa).

Substrate is bound by residues 186-188, 231-233, 273-274, and Asn317; these read HMT, SAS, and YY.

The protein belongs to the class-II aminoacyl-tRNA synthetase family. O-phosphoseryl-tRNA(Cys) synthetase subfamily. In terms of assembly, homotetramer. Interacts with SepCysS.

The catalysed reaction is tRNA(Cys) + O-phospho-L-serine + ATP = O-phospho-L-seryl-tRNA(Cys) + AMP + diphosphate. Catalyzes the attachment of O-phosphoserine (Sep) to tRNA(Cys). The sequence is that of O-phosphoserine--tRNA(Cys) ligase from Methanococcus maripaludis (strain DSM 14266 / JCM 13030 / NBRC 101832 / S2 / LL).